The sequence spans 115 residues: MMSANTVAKVMIIMLAVCLLTQTDGKPVRKRAVSEIQLMHNLGKHLASMERMQWLRRKLQDMHNFVSLGVQMAARDGSHQKPTKKEENVLVDGNPKSLGEGDKADVDVLVKSKSQ.

The signal sequence occupies residues 1–25 (MMSANTVAKVMIIMLAVCLLTQTDG). Positions 26–31 (KPVRKR) are excised as a propeptide. The important for receptor binding stretch occupies residues 51 to 69 (RMQWLRRKLQDMHNFVSLG).

The protein belongs to the parathyroid hormone family. As to quaternary structure, interacts with PTH1R (via N-terminal extracellular domain). As to expression, highly expressed in the parathyroid gland. Also expressed in the placenta, thymus and testis.

It is found in the secreted. Parathyroid hormone elevates calcium level by dissolving the salts in bone and preventing their renal excretion. Acts by binding to its receptor, PTH1R, activating G protein-coupled receptor signaling. Stimulates [1-14C]-2-deoxy-D-glucose (2DG) transport and glycogen synthesis in osteoblastic cells. The chain is Parathyroid hormone from Mus musculus (Mouse).